Here is an 871-residue protein sequence, read N- to C-terminus: Chaperone protein ClpB 1 (871 aa).

The Clp R domain maps to 6–147; the sequence is PNQFTEKAWA…REAIQQIRGS (142 aa). Repeat regions lie at residues 9 to 73 and 84 to 147; these read FTEK…ISRQ and LGQS…IRGS. Residues 160–341 are NBD1; it reads AALEKYGRDL…RRFQQVYVDQ (182 aa). ATP is bound at residue 207-214; sequence GEPGVGKT. The tract at residues 342-550 is linker; it reads PSVEDTISIL…IAEIISKWTG (209 aa). The stretch at 392 to 526 forms a coiled coil; that stretch reads IDLVDEAAAK…AEAKLREIQV (135 aa). Residues 560-771 form an NBD2 region; it reads EAQKLLHLEE…RVDEFIIFHS (212 aa). Residue 610 to 617 coordinates ATP; it reads GPTGVGKT. Residues 772–871 are C-terminal; the sequence is LRKDQLRQIV…FRRQVELATV (100 aa).

It belongs to the ClpA/ClpB family. Homohexamer. The oligomerization is ATP-dependent.

The protein localises to the cytoplasm. Functionally, part of a stress-induced multi-chaperone system, it is involved in the recovery of the cell from heat-induced damage, in cooperation with DnaK, DnaJ and GrpE. Acts before DnaK, in the processing of protein aggregates. Protein binding stimulates the ATPase activity; ATP hydrolysis unfolds the denatured protein aggregates, which probably helps expose new hydrophobic binding sites on the surface of ClpB-bound aggregates, contributing to the solubilization and refolding of denatured protein aggregates by DnaK. This chain is Chaperone protein ClpB 1 (clpB1), found in Thermosynechococcus vestitus (strain NIES-2133 / IAM M-273 / BP-1).